Here is a 269-residue protein sequence, read N- to C-terminus: Ribonuclease HII (269 aa).

One can recognise an RNase H type-2 domain in the interval 83 to 269; that stretch reads YLIAGVDEVG…HRMSFLTNIL (187 aa). Residues Asp89, Glu90, and Asp185 each contribute to the a divalent metal cation site.

The protein belongs to the RNase HII family. Requires Mn(2+) as cofactor. It depends on Mg(2+) as a cofactor.

The protein localises to the cytoplasm. The catalysed reaction is Endonucleolytic cleavage to 5'-phosphomonoester.. Endonuclease that specifically degrades the RNA of RNA-DNA hybrids. This chain is Ribonuclease HII, found in Clostridium botulinum (strain ATCC 19397 / Type A).